Reading from the N-terminus, the 662-residue chain is Cytochrome bo(3) ubiquinol oxidase subunit 1 (662 aa).

Residues 1–14 (MFGKLTFDAIPYHE) are Extracellular-facing. Residues 15-35 (PIIMITYIAIILIALCIASTI) form a helical membrane-spanning segment. Topologically, residues 36–58 (TYYKKWKYLWYEWFTTVDHKKIS) are cytoplasmic. The helical transmembrane segment at 59–79 (IMYGILAFVMLFRGFVDAILM) threads the bilayer. Arg-71, Asp-75, and His-98 together coordinate a ubiquinone. The Extracellular portion of the chain corresponds to 80 to 106 (RTQQVVASAGFKGFLPPHHYDQIFTAH). His-106 contributes to the heme b binding site. A helical membrane pass occupies residues 107 to 127 (GVIMIFFVAMPLVIGLMNLVI). The Cytoplasmic segment spans residues 128–145 (PLQIGARDVAFPFLNNLS). Residues 146–166 (FWLNVSSAVLLTLSLGIGEFA) form a helical membrane-spanning segment. Topologically, residues 167–189 (QTGWLAYPPLSGIKYSSGVGVDY) are extracellular. Trp-170 is a binding site for heme b. Residues 190-210 (WIWSLQISGVGTTLTGINFLV) form a helical membrane-spanning segment. The Cytoplasmic portion of the chain corresponds to 211 to 232 (TILKMRAPGMSFFKMPVFTWTS). A helical transmembrane segment spans residues 233-253 (LCTNILIVISFPVLTVTLVLL). At 254 to 277 (TLDRYFNFHFFTNDLGGNAMMYVN) the chain is on the extracellular side. The chain crosses the membrane as a helical span at residues 278 to 298 (LIWIWGHPEVYILVLPVFGVF). His-284 contributes to the Cu(2+) binding site. Residues 284–288 (HPEVY) constitute a cross-link (1'-histidyl-3'-tyrosine (His-Tyr)). Residue Tyr-288 participates in Fe(II)-heme o binding. Residues 299–309 (SEVVATFSKKR) are Cytoplasmic-facing. The helical transmembrane segment at 310–330 (LFGYVSLVWATLSITILSFIV) threads the bilayer. Topologically, residues 331–346 (WLHHFFTMGAGADVNT) are extracellular. The Cu(2+) site is built by His-333 and His-334. Residues 347-367 (FFGITTMIIAIPTGVKIFNWL) form a helical membrane-spanning segment. Residues 368 to 380 (FTIYQGRVHMHSS) lie on the Cytoplasmic side of the membrane. The chain crosses the membrane as a helical span at residues 381 to 401 (ILWTLGFLVTFSIGGMTGVLL). The Extracellular segment spans residues 402 to 413 (SVPPADFVLHNS). 2 residues coordinate Fe(II)-heme o: His-411 and His-419. A helical transmembrane segment spans residues 414–434 (LFLVAHFHNVIIGGVVFGCFA). Heme b is bound at residue His-421. The Cytoplasmic segment spans residues 435–456 (GINYWFPKLFGFVLNEIWGKRA). A helical membrane pass occupies residues 457 to 477 (FWFWIIGFFLAFIPLYFLGLM). Residues 478 to 493 (GMTRRLSQNIDSEFHM) lie on the Extracellular side of the membrane. Arg-481 and Arg-482 together coordinate heme b. The helical transmembrane segment at 494 to 514 (LLCIAAIGACFIGIGIICQVI) threads the bilayer. The Cytoplasmic portion of the chain corresponds to 515 to 586 (QFFISIKERR…INSINYHDIH (72 aa)). Residues 587–607 (MPKNTGLGFMISIFSLFFGFS) traverse the membrane as a helical segment. Position 608 (Ala-608) is a topological domain, extracellular. A helical membrane pass occupies residues 609 to 629 (VWHITWLCILSFLAIIISLFI). Topologically, residues 630 to 662 (NSLNEDTEYTISAEEIKKIEHQYWKNIQKAGLK) are cytoplasmic.

This sequence belongs to the heme-copper respiratory oxidase family. In terms of assembly, the cytochrome bo(3) ubiquinol oxidase complex is a heterooctamer of two A chains, two B chains, two C chains and two D chains. Cu(2+) serves as cofactor. It depends on heme b as a cofactor. The cofactor is Fe(II)-heme o.

It localises to the cell membrane. The catalysed reaction is 2 a ubiquinol + O2 + n H(+)(in) = 2 a ubiquinone + 2 H2O + n H(+)(out). In terms of biological role, cytochrome bo(3) ubiquinol oxidase is the terminal enzyme in the aerobic respiratory chain. Catalyzes the four-electron reduction of O2 to water, using a ubiquinol as a membrane soluble electron donor for molecular oxygen reduction. Has proton pump activity across the membrane in addition to electron transfer, pumping 2 protons/electron and generating a proton motive force. All the redox centers of this enzyme complex are located within the largest subunit, subunit I. Protons are probably pumped via D- and K- channels found in this subunit. This Buchnera aphidicola subsp. Acyrthosiphon pisum (strain APS) (Acyrthosiphon pisum symbiotic bacterium) protein is Cytochrome bo(3) ubiquinol oxidase subunit 1 (cyoB).